Here is a 405-residue protein sequence, read N- to C-terminus: Cystathionine gamma-lyase (405 aa).

Residues Arg62, Tyr114, and Arg119 each coordinate substrate. Position 212 is an N6-(pyridoxal phosphate)lysine (Lys212). Residue Glu339 participates in substrate binding.

Belongs to the trans-sulfuration enzymes family. As to quaternary structure, homotetramer. Interacts with CALM in a calcium-dependent manner. Pyridoxal 5'-phosphate is required as a cofactor.

It is found in the cytoplasm. It carries out the reaction L,L-cystathionine + H2O = 2-oxobutanoate + L-cysteine + NH4(+). The catalysed reaction is L-cysteine + H2O = hydrogen sulfide + pyruvate + NH4(+) + H(+). The enzyme catalyses L-homocysteine + H2O = 2-oxobutanoate + hydrogen sulfide + NH4(+) + H(+). It catalyses the reaction L-homoserine = 2-oxobutanoate + NH4(+). It carries out the reaction L-selenocystathionine + H2O = L-selenocysteine + 2-oxobutanoate + NH4(+). The protein operates within amino-acid biosynthesis; L-cysteine biosynthesis; L-cysteine from L-homocysteine and L-serine: step 2/2. Its function is as follows. Catalyzes the last step in the trans-sulfuration pathway from L-methionine to L-cysteine in a pyridoxal-5'-phosphate (PLP)-dependent manner, which consists on cleaving the L,L-cystathionine molecule into L-cysteine, ammonia and 2-oxobutanoate. Part of the L-cysteine derived from the trans-sulfuration pathway is utilized for biosynthesis of the ubiquitous antioxidant glutathione. Besides its role in the conversion of L-cystathionine into L-cysteine, it utilizes L-cysteine and L-homocysteine as substrates (at much lower rates than L,L-cystathionine) to produce hydrogen sulfide (H2S). In vitro, it converts two L-cysteine molecules into lanthionine and H2S, and two L-homocysteine molecules to homolanthionine and H2S, which can be particularly relevant under conditions of severe hyperhomocysteinemia. Lanthionine and homolanthionine are structural homologs of L,L-cystathionine that differ by the absence or presence of an extra methylene group, respectively. Acts as a cysteine-protein sulfhydrase by mediating sulfhydration of target proteins: sulfhydration consists of converting -SH groups into -SSH on specific cysteine residues of target proteins such as GAPDH, PTPN1 and NF-kappa-B subunit RELA, thereby regulating their function. By generating the gasotransmitter H2S, it participates in a number of physiological processes such as vasodilation, bone protection, and inflammation. Plays an essential role in myogenesis by contributing to the biogenesis of H2S in skeletal muscle tissue. Can also accept homoserine as substrate. Catalyzes the elimination of selenocystathionine (which can be derived from the diet) to yield selenocysteine, ammonia and 2-oxobutanoate. This Macaca fascicularis (Crab-eating macaque) protein is Cystathionine gamma-lyase (CTH).